Reading from the N-terminus, the 522-residue chain is 2-isopropylmalate synthase (522 aa).

The 263-residue stretch at valine 5 to histidine 267 folds into the Pyruvate carboxyltransferase domain. Mn(2+) contacts are provided by aspartate 14, histidine 202, histidine 204, and asparagine 238. Positions glutamine 392–valine 522 are regulatory domain.

It belongs to the alpha-IPM synthase/homocitrate synthase family. LeuA type 1 subfamily. Homodimer. Requires Mn(2+) as cofactor.

The protein resides in the cytoplasm. It catalyses the reaction 3-methyl-2-oxobutanoate + acetyl-CoA + H2O = (2S)-2-isopropylmalate + CoA + H(+). The protein operates within amino-acid biosynthesis; L-leucine biosynthesis; L-leucine from 3-methyl-2-oxobutanoate: step 1/4. Functionally, catalyzes the condensation of the acetyl group of acetyl-CoA with 3-methyl-2-oxobutanoate (2-ketoisovalerate) to form 3-carboxy-3-hydroxy-4-methylpentanoate (2-isopropylmalate). The polypeptide is 2-isopropylmalate synthase (Shewanella baltica (strain OS195)).